A 109-amino-acid chain; its full sequence is Probable endoribonuclease MazF5 (109 aa).

The protein belongs to the PemK/MazF family. Forms a complex with cognate antitoxin MazE5.

Its function is as follows. Toxic component of a type II toxin-antitoxin (TA) system. Upon expression in M.smegmatis inhibits colony formation. Its toxic effect is neutralized by coexpression with cognate antitoxin MazE5. Probably an endoribonuclease. This chain is Probable endoribonuclease MazF5 (mazF5), found in Mycobacterium tuberculosis (strain ATCC 25618 / H37Rv).